A 354-amino-acid chain; its full sequence is MTKHYLNSKYQSEQRSSAMKKITMGTASIILGSLVYIGADSQQVNAATEATNATNNQSTQVSQATSQPINFQVQKDGSSEKSHMDDYMQHPGKVIKQNNKYYFQAVLNNASFWKEYKFYNANNQELATTVVNDDKKADTRTINVAVEPGYKSLTTKVHIVVPQINYNHRYTTHLEFEKAIPTLADAAKPNNVKPVQPKPAQPKTPTEQTKPVQPKVEKVKPAVTAPSKNENRQTTKVVSSEATKDQSQTQSARTVKTTQTAQDQNKVQTPVKDVATAKSESNNQAVSDNKSQQTNKVTKQNEVHKQGPSKDSKAKELPKTGLTSVDNFISTVAFATLALLGSLSLLLFKRKESK.

A signal peptide spans 1 to 46 (MTKHYLNSKYQSEQRSSAMKKITMGTASIILGSLVYIGADSQQVNA). One can recognise an NEAT domain in the interval 62–184 (SQATSQPINF…EFEKAIPTLA (123 aa)). 3 residues coordinate heme: lysine 75, serine 82, and tyrosine 166. Residues 188-318 (KPNNVKPVQP…SKDSKAKELP (131 aa)) are disordered. Positions 203–214 (KTPTEQTKPVQP) are enriched in low complexity. Polar residues-rich tracts occupy residues 226–268 (PSKN…NKVQ) and 278–298 (KSESNNQAVSDNKSQQTNKVT). The segment covering 299–318 (KQNEVHKQGPSKDSKAKELP) has biased composition (basic and acidic residues). The LPXTG sorting signal motif lies at 317–321 (LPKTG). Residue threonine 320 is modified to Pentaglycyl murein peptidoglycan amidated threonine. Residues 321-354 (GLTSVDNFISTVAFATLALLGSLSLLLFKRKESK) constitute a propeptide, removed by sortase A.

It belongs to the IsdA family. As to quaternary structure, monomer. Interacts with IsdC. Interacts with IsdB.

It is found in the secreted. Its subcellular location is the cell wall. Functionally, cell wall-anchored surface receptor that participates in the extraction of heme from oxidized methemoglobin/metHb to enable growth on hemoglobin as a sole iron source. Receives heme from IsdB and transfers it to IsdC. Also plays a role in the inhibition of host immune response. Protects S.aureus against the bactericidal protease activity of apolactoferrin. Decreases bacterial cellular hydrophobicity, which renders S.aureus resistant to bactericidal human skin fatty acids as well as to beta-defensins and cathelicidin. Also binds fibronectin and chains B-beta and gamma of fibrinogen, promoting clumping of S.aureus with fibrinogen. Involved in adherence of S.aureus to human desquamated nasal epithelial cells and is required for nasal colonization. This is Iron-regulated surface determinant protein A (isdA) from Staphylococcus aureus (strain MRSA252).